Consider the following 317-residue polypeptide: Enoyl-CoA delta isomerase 3, peroxisomal (317 aa).

The 46-residue stretch at 1–46 (MPKPGVFNFVNKATWDARNALGSLPKETARKNYVDLVSSLSSSSEA) folds into the ACB domain. The segment at 40–60 (LSSSSEAPSQGKRGADEKARE) is disordered. Substrate is bound at residue 120–124 (SGNDL). Positions 315 to 317 (AKL) match the Microbody targeting signal motif.

This sequence belongs to the enoyl-CoA hydratase/isomerase family. As to expression, expressed at high levels in the kidney. Also detected at very low levels in the duodenum, jejunum, ileum, heart, liver, lung, and brown adipose tissue (at protein level). In the kidney, expression seems to be localized mainly to the proximal tubule.

The protein resides in the peroxisome. It catalyses the reaction a (3Z)-enoyl-CoA = a 4-saturated (2E)-enoyl-CoA. The enzyme catalyses a (3E)-enoyl-CoA = a 4-saturated (2E)-enoyl-CoA. It carries out the reaction (3E)-nonenoyl-CoA = (2E)-nonenoyl-CoA. In terms of biological role, catalyzes the isomerization of trans-3-nonenoyl-CoA into trans-2-nonenoyl-CoA. May also have activity towards other enoyl-CoA species. In Mus musculus (Mouse), this protein is Enoyl-CoA delta isomerase 3, peroxisomal.